The chain runs to 499 residues: Diacylglycerol kinase 1 (499 aa).

The region spanning 41-194 (APCCPVVVFI…IDSWHIIMRM (154 aa)) is the DAGKc domain. Residues 442–479 (PCKSKSVNDPSSPMCCSNHDDDERNSLEDEDEWEEGRK) are disordered. The span at 446–456 (KSVNDPSSPMC) shows a compositional bias: polar residues. Residues 459-468 (NHDDDERNSL) are compositionally biased toward basic and acidic residues.

This sequence belongs to the eukaryotic diacylglycerol kinase family. As to quaternary structure, monomer. As to expression, highly expressed in roots.

The enzyme catalyses a 1,2-diacyl-sn-glycerol + ATP = a 1,2-diacyl-sn-glycero-3-phosphate + ADP + H(+). In terms of biological role, phosphorylates the second messenger diacylglycerol (DAG) to generate phosphatidic acid (PA), another important signaling molecule. PA is required for plant development and responses to abiotic stress. May play a role in disease resistance responses to pathogen attack. Modulates root architecture by regulating the ratio of DAG and PA, which have opposite effect on the promotion or suppression of lateral roots vs seminal roots. Suppresses lateral root number, but promotes seminal root and crown root thickness. In Oryza sativa subsp. japonica (Rice), this protein is Diacylglycerol kinase 1.